Here is a 138-residue protein sequence, read N- to C-terminus: Acidic phospholipase A2 jerdoxin (138 aa).

Residues 1–16 (MRTLWIMAVLLVGVEG) form the signal peptide. Cystine bridges form between Cys42-Cys131, Cys44-Cys60, Cys59-Cys111, Cys65-Cys138, Cys66-Cys104, Cys73-Cys97, and Cys91-Cys102. 3 residues coordinate Ca(2+): Tyr43, Gly45, and Gly47. Residue His63 is part of the active site. Asp64 serves as a coordination point for Ca(2+). Asp105 is an active-site residue.

The protein belongs to the phospholipase A2 family. Group II subfamily. D49 sub-subfamily. Monomer. Ca(2+) serves as cofactor. In terms of tissue distribution, expressed by the venom gland.

It localises to the secreted. The catalysed reaction is a 1,2-diacyl-sn-glycero-3-phosphocholine + H2O = a 1-acyl-sn-glycero-3-phosphocholine + a fatty acid + H(+). Snake venom phospholipase A2 (PLA2) that displays edema-inducing activities, exhibits indirect hemolytic activity, and inhibits ADP-induced platelet aggregation. PLA2 catalyzes the calcium-dependent hydrolysis of the 2-acyl groups in 3-sn-phosphoglycerides. In Protobothrops jerdonii (Jerdon's pitviper), this protein is Acidic phospholipase A2 jerdoxin.